An 88-amino-acid chain; its full sequence is Small ribosomal subunit protein bS16c (88 aa).

This sequence belongs to the bacterial ribosomal protein bS16 family.

Its subcellular location is the plastid. It localises to the chloroplast. The sequence is that of Small ribosomal subunit protein bS16c from Jasminum nudiflorum (Winter jasmine).